Reading from the N-terminus, the 772-residue chain is Hyperosmolality-gated Ca2+ permeable channel 1.1 (772 aa).

Residues 1–5 (MATLK) are Extracellular-facing. Residues 6 to 28 (DIGVSAGINILTAFIFFIIFAFL) traverse the membrane as a helical segment. The Cytoplasmic segment spans residues 29-100 (RLQPFNDRVY…AGLDSVVYLR (72 aa)). The helical transmembrane segment at 101–122 (IYWLGLKIFAPIAMLAWAVLVP) threads the bilayer. Over 123–159 (VNWTNNELELAKHFKNVTSSDIDKLTISNIPEGSNRF) the chain is Extracellular. Residue Asn138 is glycosylated (N-linked (GlcNAc) asparagine). A helical membrane pass occupies residues 160–180 (WAHIIMAYAFTIWTCYMLMKE). Over 181–372 (YETVANMRLQ…PNLAIPYVSL (192 aa)) the chain is Cytoplasmic. Residues 339–344 (QTTQTR) are cytoplasmic region required for homodimerization. The helical transmembrane segment at 373-398 (TVRRLVMNVAFFFLTFFFIIPIAFVQ) threads the bilayer. Over 399–424 (SLATIEGIEKVAPFLKVIIEKDFIKS) the chain is Extracellular. Residues 425–450 (LIQGLLAGIALKLFLIFLPAILMTMS) form a helical membrane-spanning segment. Over 451–461 (KFEGFTSVSFL) the chain is Cytoplasmic. Residues 462–485 (ERRSASRYYIFNLVNVFLGSVIAG) form a helical membrane-spanning segment. Topologically, residues 486-509 (AAFEQLNSFLNQSPNQIPKTIGMA) are extracellular. A helical membrane pass occupies residues 510 to 538 (IPMKATFFITYIMVDGWAGVAGEILMLKP). Topologically, residues 539–566 (LIIYHLKNAFLVKTEKDREEAMNPGSIG) are cytoplasmic. Residues 567 to 587 (FNTGEPQIQLYFLLGLVYAPV) form a helical membrane-spanning segment. A topological domain (extracellular) is located at residue Thr588. The helical transmembrane segment at 589–606 (PMLLPFILVFFALAYVVY) threads the bilayer. Residues 607–624 (RHQIINVYNQEYESAAAF) lie on the Cytoplasmic side of the membrane. Residues 625-647 (WPDVHGRVITALIISQLLLMGLL) form a helical membrane-spanning segment. Residues 648–653 (GTKHAA) are Extracellular-facing. Residues 654-674 (SAAPFLIALPVITIGFHRFCK) form a helical membrane-spanning segment. Residues 675–772 (GRFEPAFVRY…SLAVINGKEV (98 aa)) lie on the Cytoplasmic side of the membrane. Positions 686-688 (LQE) are cytoplasmic region required for homodimerization. Residues 743-772 (KRQSRRNTPAPSRISGESSPSLAVINGKEV) are disordered. The span at 748–763 (RNTPAPSRISGESSPS) shows a compositional bias: polar residues.

The protein belongs to the CSC1 (TC 1.A.17) family. As to quaternary structure, homodimer. As to expression, expressed in leaves, flowers, roots and guard cells.

The protein localises to the cell membrane. Its activity is regulated as follows. Activated by mechanical pressure. Acts as a hyperosmolarity-gated non-selective cation channel that permeates Ca(2+) ions. Shows the following permeability sequence: K(+) &gt; Ba(2+) = Ca(2+) &gt; Na(+) = Mg(2+) = Cs(+). Mechanosensitive ion channel that converts mechanical stimuli into a flow of ions: activated in response to membrane stretch and poke. This is Hyperosmolality-gated Ca2+ permeable channel 1.1 from Arabidopsis thaliana (Mouse-ear cress).